A 360-amino-acid polypeptide reads, in one-letter code: Alanine racemase (360 aa).

Lys-36 functions as the Proton acceptor; specific for D-alanine in the catalytic mechanism. An N6-(pyridoxal phosphate)lysine modification is found at Lys-36. Arg-132 serves as a coordination point for substrate. The active-site Proton acceptor; specific for L-alanine is the Tyr-256. Met-304 is a substrate binding site.

The protein belongs to the alanine racemase family. Pyridoxal 5'-phosphate is required as a cofactor.

The enzyme catalyses L-alanine = D-alanine. It functions in the pathway amino-acid biosynthesis; D-alanine biosynthesis; D-alanine from L-alanine: step 1/1. Catalyzes the interconversion of L-alanine and D-alanine. May also act on other amino acids. The sequence is that of Alanine racemase (alr) from Pasteurella multocida (strain Pm70).